We begin with the raw amino-acid sequence, 2272 residues long: Voltage-dependent R-type calcium channel subunit alpha-1E (2272 aa).

The interval 1 to 40 (MARFGEAVVVGRPGSGDGDSDQSRNRQGTPVPASGPAAAY) is disordered. Residues 1–90 (MARFGEAVVV…KYAKKLIDWP (90 aa)) are Cytoplasmic-facing. S15 and S20 each carry phosphoserine. The stretch at 77 to 355 (NIVRKYAKKL…LVLGVLSGEF (279 aa)) is one I repeat. A helical transmembrane segment spans residues 91-109 (PFEYMILATIIANCIVLAL). Residues 110 to 128 (EQHLPEDDKTPMSRRLEKT) are Extracellular-facing. Residues 129 to 147 (EPYFIGIFCFEAGIKIVAL) traverse the membrane as a helical segment. Over 148–159 (GFIFHKGSYLRN) the chain is Cytoplasmic. A helical membrane pass occupies residues 160–174 (GWNVMDFIVVLSGIL). Residues 175–186 (ATAGTHFNTHVD) lie on the Extracellular side of the membrane. A helical transmembrane segment spans residues 187 to 206 (LRALRAVRVLRPLKLVSGIP). At 207–224 (SLQIVLKSIMKAMVPLLQ) the chain is on the cytoplasmic side. Residues 225–245 (IGLLLFFAILMFAIIGLEFYS) form a helical membrane-spanning segment. The Extracellular segment spans residues 246 to 327 (GKLHRACFMN…NTNDALGATW (82 aa)). The N-linked (GlcNAc...) asparagine glycan is linked to N255. Residues 328–351 (NWLYFIPLIIIGSFFVLNLVLGVL) form a helical membrane-spanning segment. The Cytoplasmic segment spans residues 352-477 (SGEFAKERER…ISIRHMVKSQ (126 aa)). The tract at residues 375-392 (QQIERELNGYRAWIDKAE) is binding to the beta subunit. A Ca(2+)-binding site is contributed by D427. S428 is subject to Phosphoserine. S429, E431, C433, and S438 together coordinate Ca(2+). T441 is subject to Phosphothreonine. An II repeat occupies 463–707 (ERLLRISIRH…VFLAIAVDNL (245 aa)). A helical transmembrane segment spans residues 478 to 497 (VFYWIVLSVVALNTACVAIV). The Extracellular segment spans residues 498–510 (HHNQPQWLTHLLY). Residues 511–530 (YAEFLFLGLFLLEMSLKMYG) form a helical membrane-spanning segment. Residues 531 to 539 (MGPRLYFHS) are Cytoplasmic-facing. Residues 540–558 (SFNCFDFGVTVGSIFEVVW) traverse the membrane as a helical segment. At 559-568 (AIFRPGTSFG) the chain is on the extracellular side. Residues 569–587 (ISVLRALRLLRIFKITKYW) form a helical membrane-spanning segment. Residues 588 to 606 (ASLRNLVVSLMSSMKSIIS) are Cytoplasmic-facing. The helical transmembrane segment at 607–626 (LLFLLFLFIVVFALLGMQLF) threads the bilayer. The Extracellular segment spans residues 627 to 679 (GGRFNFNDGTPSANFDTFPAAIMTVFQILTGEDWNEVMYNGIRSQGGVSSGMW). A helical transmembrane segment spans residues 680-704 (SAIYFIVLTLFGNYTLLNVFLAIAV). The Cytoplasmic segment spans residues 705–1150 (DNLANAQELT…TTNPIRRACH (446 aa)). The disordered stretch occupies residues 730-777 (LQKAKEVSPMSAPNMPSIERDRRRRHHMSMWEPRSSHLRERRRRHHMS). S737, S746, S794, S816, and S856 each carry phosphoserine. Disordered stretches follow at residues 854-994 (GGSL…VPRG) and 1091-1127 (SNKT…RETG). Over residues 914-927 (RHRQSQRRSRHRRV) the composition is skewed to basic residues. A compositionally biased stretch (low complexity) spans 934–946 (SASASRSRSASQE). Phosphoserine is present on S948. 2 stretches are compositionally biased toward basic and acidic residues: residues 956–985 (EGEK…DLRR) and 1094–1105 (TDGEASPLKEAE). S1099 is subject to Phosphoserine. The stretch at 1143 to 1429 (NPIRRACHYI…IFVALIIITF (287 aa)) is one III repeat. The helical transmembrane segment at 1151 to 1167 (YIVNLRYFEMCILLVIA) threads the bilayer. Residues 1168–1191 (ASSIALAAEDPVLTNSERNKVLRY) lie on the Extracellular side of the membrane. A helical transmembrane segment spans residues 1192–1211 (FDYVFTGVFTFEMVIKMIDQ). The Cytoplasmic segment spans residues 1212-1219 (GLILQDGS). The chain crosses the membrane as a helical span at residues 1220–1242 (YFRDLWNILDFVVVVGALVAFAL). Over 1243-1256 (ANALGTNKGRDIKT) the chain is Extracellular. A helical membrane pass occupies residues 1257 to 1274 (IKSLRVLRVLRPLKTIKR). Over 1275–1293 (LPKLKAVFDCVVTSLKNVF) the chain is Cytoplasmic. A helical membrane pass occupies residues 1294–1313 (NILIVYKLFMFIFAVIAVQL). Residues 1314 to 1400 (FKGKFFYCTD…DRGPSRSNRM (87 aa)) lie on the Extracellular side of the membrane. The helical transmembrane segment at 1401 to 1424 (EMSIFYVVYFVVFPFFFVNIFVAL) threads the bilayer. The Cytoplasmic portion of the chain corresponds to 1425–1481 (IIITFQEQGDKMMEECSLEKNERACIDFAISAKPLTRYMPQNRHTFQYRVWHFVVSP). Residues 1466 to 1729 (NRHTFQYRVW…LFVAVIMDNF (264 aa)) form an IV repeat. The helical transmembrane segment at 1482 to 1500 (SFEYTIMAMIALNTVVLMM) threads the bilayer. Residues 1501-1515 (KYYTAPCTYELALKY) lie on the Extracellular side of the membrane. Residues 1516 to 1535 (LNIAFTMVFSLECVLKVIAF) traverse the membrane as a helical segment. Topologically, residues 1536 to 1543 (GFLNYFRD) are cytoplasmic. Residues 1544–1562 (TWNIFDFITVIGSITEIIL) traverse the membrane as a helical segment. The Extracellular segment spans residues 1563–1573 (TDSKLVNTSGF). The N-linked (GlcNAc...) asparagine glycan is linked to N1569. The chain crosses the membrane as a helical span at residues 1574–1592 (NMSFLKLFRAARLIKLLRQ). The Cytoplasmic portion of the chain corresponds to 1593–1611 (GYTIRILLWTFVQSFKALP). Residues 1612 to 1631 (YVCLLIAMLFFIYAIIGMQV) traverse the membrane as a helical segment. Residues 1632–1700 (FGNIKLDEES…QNESERCGTD (69 aa)) lie on the Extracellular side of the membrane. Residue N1692 is glycosylated (N-linked (GlcNAc...) asparagine). A helical membrane pass occupies residues 1701–1726 (LAYVYFVSFIFFCSFLMLNLFVAVIM). Residues 1727–2272 (DNFEYLTRDS…LSDTEEDDKC (546 aa)) lie on the Cytoplasmic side of the membrane. An EF-hand domain is found at 1742–1777 (HHLDEFVRVWAEYDRAACGRIHYTEMYEMLTLMSPP). Ca(2+) is bound by residues D1755, R1761, and E1766. A disordered region spans residues 2021–2186 (SAHRLNSDSG…QQGQHPSPQH (166 aa)). Residues 2025–2045 (LNSDSGHKSDTHRSGGRERGR) are compositionally biased toward basic and acidic residues. Phosphoserine occurs at positions 2054 and 2073. Basic and acidic residues predominate over residues 2061-2078 (NSEERGTQADWESPERRQ). Positions 2097-2112 (SLSESSIPSISDTSTP) are enriched in low complexity. Polar residues predominate over residues 2155 to 2174 (LASQALESNSACLTESSNSL). Positions 2175 to 2186 (HPQQGQHPSPQH) are enriched in low complexity.

This sequence belongs to the calcium channel alpha-1 subunit (TC 1.A.1.11) family. CACNA1E subfamily. In terms of assembly, interacts with EFHC1. Voltage-dependent calcium channels are multisubunit complexes, consisting of alpha-1, alpha-2, beta and delta subunits in a 1:1:1:1 ratio. The channel activity is directed by the pore-forming and voltage-sensitive alpha-1 subunit. In many cases, this subunit is sufficient to generate voltage-sensitive calcium channel activity. The auxiliary subunits beta and alpha-2/delta linked by a disulfide bridge regulate the channel activity. In terms of tissue distribution, expressed in neuronal tissues, retina, spleen, and pancreatic islet cells.

It localises to the membrane. It carries out the reaction Ca(2+)(in) = Ca(2+)(out). Functionally, voltage-sensitive calcium channels (VSCC) mediate the entry of calcium ions into excitable cells and are also involved in a variety of calcium-dependent processes, including muscle contraction, hormone or neurotransmitter release, gene expression, cell motility, cell division and cell death. The isoform alpha-1E gives rise to R-type calcium currents. R-type calcium channels belong to the 'high-voltage activated' (HVA) group and are blocked by nickel. They are however insensitive to dihydropyridines (DHP). Calcium channels containing alpha-1E subunit could be involved in the modulation of firing patterns of neurons which is important for information processing. The sequence is that of Voltage-dependent R-type calcium channel subunit alpha-1E (Cacna1e) from Mus musculus (Mouse).